The primary structure comprises 379 residues: Protein OSCP1 (379 aa).

As to expression, predominantly expressed in testis.

Its subcellular location is the basal cell membrane. In terms of biological role, may be involved in drug clearance in the placenta. The protein is Protein OSCP1 (Oscp1) of Mus musculus (Mouse).